Consider the following 40-residue polypeptide: Photosystem II reaction center protein J (40 aa).

The chain crosses the membrane as a helical span at residues isoleucine 8 to phenylalanine 28.

Belongs to the PsbJ family. PSII is composed of 1 copy each of membrane proteins PsbA, PsbB, PsbC, PsbD, PsbE, PsbF, PsbH, PsbI, PsbJ, PsbK, PsbL, PsbM, PsbT, PsbX, PsbY, PsbZ, Psb30/Ycf12, at least 3 peripheral proteins of the oxygen-evolving complex and a large number of cofactors. It forms dimeric complexes.

It is found in the plastid. The protein localises to the chloroplast thylakoid membrane. One of the components of the core complex of photosystem II (PSII). PSII is a light-driven water:plastoquinone oxidoreductase that uses light energy to abstract electrons from H(2)O, generating O(2) and a proton gradient subsequently used for ATP formation. It consists of a core antenna complex that captures photons, and an electron transfer chain that converts photonic excitation into a charge separation. The sequence is that of Photosystem II reaction center protein J from Nasturtium officinale (Watercress).